A 599-amino-acid polypeptide reads, in one-letter code: Endo-1,4-beta-xylanase B (599 aa).

A signal peptide spans 1–37; it reads MTISASDYRHPGNFLKRTTALLCVGTALTALAFNASA. In terms of domain architecture, CBM2 spans 38-136; it reads ACTYTIDSEW…TVTGAACNSA (99 aa). A disulfide bridge links Cys-39 with Cys-133. The CBM6 domain maps to 163-289; it reads LLQEAQAGFC…LPNIDSLSVV (127 aa). One can recognise a GH10 domain in the interval 315-595; sequence SSSAASAKKF…RPAMTWLINN (281 aa). Glu-431 (proton donor) is an active-site residue. Glu-530 (nucleophile) is an active-site residue.

Belongs to the glycosyl hydrolase 10 (cellulase F) family.

It carries out the reaction Endohydrolysis of (1-&gt;4)-beta-D-xylosidic linkages in xylans.. It participates in glycan metabolism; hemicellulose degradation. Xylanase B contributes to hydrolyze hemicellulose, the major component of plant cell-walls. This chain is Endo-1,4-beta-xylanase B (xynB), found in Cellvibrio japonicus (strain Ueda107) (Pseudomonas fluorescens subsp. cellulosa).